The sequence spans 185 residues: Neuronal vesicle trafficking-associated protein 1 (185 aa).

Residues 1–82 are Cytoplasmic-facing; sequence MVKLGNNFAE…ITEGVTERFK (82 aa). A helical; Signal-anchor for type II membrane protein membrane pass occupies residues 83–103; it reads VSVLVLFALAFLTCVVFLVVY. The Lumenal portion of the chain corresponds to 104–185; it reads KVYKYDRACP…QETEAAEKSA (82 aa). The tract at residues 129-164 is required for GRIP1 interaction; sequence ESYYAEQDSSAREKFYTVINHYNLAKQSITRSVSPW.

It belongs to the NSG family. Forms a complex with GRIP1, GRIA2 and STX12 through direct interaction with GRIP1; controls the intracellular fate of AMPAR and the endosomal sorting of the GRIA2 subunit toward recycling and membrane targeting. Interacts with STX12. Interacts with APP; could regulate APP processing. Interacts with FAM171A1.

Its subcellular location is the membrane. It is found in the golgi apparatus. The protein resides in the trans-Golgi network membrane. It localises to the endosome membrane. The protein localises to the cell projection. Its subcellular location is the dendrite. It is found in the early endosome membrane. The protein resides in the late endosome membrane. It localises to the lysosome lumen. The protein localises to the recycling endosome membrane. Its subcellular location is the cytoplasmic vesicle membrane. It is found in the golgi stack membrane. The protein resides in the endosome. It localises to the multivesicular body membrane. The protein localises to the endoplasmic reticulum membrane. Functionally, plays a role in the recycling mechanism in neurons of multiple receptors, including AMPAR, APP and L1CAM and acts at the level of early endosomes to promote sorting of receptors toward a recycling pathway. Regulates sorting and recycling of GRIA2 through interaction with GRIP1 and then contributes to the regulation of synaptic transmission and plasticity by affecting the recycling and targeting of AMPA receptors to the synapse. Is required for faithful sorting of L1CAM to axons by facilitating trafficking from somatodendritic early endosome or the recycling endosome. In an other hand, induces apoptosis via the activation of CASP3 in response to DNA damage. The polypeptide is Neuronal vesicle trafficking-associated protein 1 (Macaca fascicularis (Crab-eating macaque)).